Consider the following 258-residue polypeptide: Phosphoribosylaminoimidazole-succinocarboxamide synthase (258 aa).

The protein belongs to the SAICAR synthetase family.

It catalyses the reaction 5-amino-1-(5-phospho-D-ribosyl)imidazole-4-carboxylate + L-aspartate + ATP = (2S)-2-[5-amino-1-(5-phospho-beta-D-ribosyl)imidazole-4-carboxamido]succinate + ADP + phosphate + 2 H(+). It participates in purine metabolism; IMP biosynthesis via de novo pathway; 5-amino-1-(5-phospho-D-ribosyl)imidazole-4-carboxamide from 5-amino-1-(5-phospho-D-ribosyl)imidazole-4-carboxylate: step 1/2. The chain is Phosphoribosylaminoimidazole-succinocarboxamide synthase from Rhizorhabdus wittichii (strain DSM 6014 / CCUG 31198 / JCM 15750 / NBRC 105917 / EY 4224 / RW1) (Sphingomonas wittichii).